The sequence spans 868 residues: MRNAGVQVDTNMQKISLQDTVLVNEMKGRVKFIGETQFAKGIWYGIELDKPLGKNDGSANGIRYFDIDLKKANSNGGYYGLFCKKDTLQFYKPDDDEHSLLNGNAAQETIKNLQVKCESLASKLNKIKIENHELKTSVEKLSTNETVLLSKISRLDKLVKELKVENGNMKTHLDNFNHLLDASDSVMAPDLDKGTLLERSHLLQGLLDQTKLSYDKAMKVQEDLLEENTQLLEENAVLSKKISDLGLQLQQTNNTIGDLALQIEAQSKSSNIVDKLTNDNILLTSNIKALNNELEELQAKEKLDENLRITYEQLEQELRLQLSNLQSALENEKEIAGTYIEENSRLKATLESIEAKTSHKFQSLELKVNTLQEELYQNKLLKKFYQIYEPFAQPHLAALSSQLQYLAEVIESENFGKLENIEIHIILKVLSSISYALHIYTIKNTPDHLETTLQCFKVNIAPISMWLSEFLQRKFSSKQETAFSICQFLEDNKFLDKDVTLILKILHPILETTVPKLLAFLRTNSNFNDNDTLCLIGSLYERSLSLIARIDKLIGKEEISKQDNRLFLYPSCDITLSSILTILFSDALFLRQDYKRISSLKKLEVFFQGIESLLENITIFPEQPSQQTSDSESQCNIKEGNFSNSLLSDRLNEENIRLKEVLVQKENMLTELETKIKIIIGRDLERKTLEENIKTLKVELNNKNEENCGKTEILNKLKEENFNLVNRLKNMELKLYQIKDNNTLNKIYLDREKVDRVNLVSEIMELRETIRRQIKEQKRVSIDFSWLDELPAVENKQPFKEHINHSLDTLGIEMFNFVSTSRILDLKLDQPLAEDELWHERDHSYISYLKRKRKNIRLKSQNVVTYYK.

Residues 34–84 (GETQFAKGIWYGIELDKPLGKNDGSANGIRYFDIDLKKANSNGGYYGLFCK) enclose the CAP-Gly domain. Coiled-coil stretches lie at residues 101–175 (LNGN…HLDN), 207–375 (LDQT…QEEL), and 645–776 (SLLS…QIKE).

As to quaternary structure, component of the dynactin complex composed of at least ARP1, JNM1, NIP100 and ARP10. Dynactin comprises a short rod of the ARP1 filament attached to ARP10 at its pointed-end and probably associated with the capping protein at its barbed-end. The rod is implicated in dynein cargo binding. A sidearm formed by NIP100 projects from the ARP1 filament and is implicated in motor binding.

Its subcellular location is the cytoplasm. The protein localises to the cytoskeleton. It localises to the spindle pole. Motor-binding component of the dynactin complex which assists cytoplasmic dynein by increasing its processivity and by regulation of its cargo binding. The dynactin complex is required for the spindle translocation late in anaphase and is involved in a cell wall synthesis checkpoint. The sequence is that of Protein NIP100 (NIP100) from Saccharomyces cerevisiae (strain ATCC 204508 / S288c) (Baker's yeast).